Consider the following 197-residue polypeptide: MIGRLRGIVAYKAPPWLVVDVNGVGYELEAPMSTFYDLPELGREVTLYTHYSQKEDSVSLYGFLREGERRLFRDVQKVSGIGAKIALAVLSGVTVEEFARMVQAGDITALTRIPGIGKKTAERMVLELRDRAAQFGAGGALPTGSGPAPADPLSDATVALQQLGYKPAEAARMARDAFNEGDEVATVIRKALQSALR.

The tract at residues 1–64 (MIGRLRGIVA…EDSVSLYGFL (64 aa)) is domain I. The interval 65 to 143 (REGERRLFRD…QFGAGGALPT (79 aa)) is domain II. The interval 144-153 (GSGPAPADPL) is flexible linker. Positions 153–197 (LSDATVALQQLGYKPAEAARMARDAFNEGDEVATVIRKALQSALR) are domain III.

This sequence belongs to the RuvA family. As to quaternary structure, homotetramer. Forms an RuvA(8)-RuvB(12)-Holliday junction (HJ) complex. HJ DNA is sandwiched between 2 RuvA tetramers; dsDNA enters through RuvA and exits via RuvB. An RuvB hexamer assembles on each DNA strand where it exits the tetramer. Each RuvB hexamer is contacted by two RuvA subunits (via domain III) on 2 adjacent RuvB subunits; this complex drives branch migration. In the full resolvosome a probable DNA-RuvA(4)-RuvB(12)-RuvC(2) complex forms which resolves the HJ.

The protein resides in the cytoplasm. Functionally, the RuvA-RuvB-RuvC complex processes Holliday junction (HJ) DNA during genetic recombination and DNA repair, while the RuvA-RuvB complex plays an important role in the rescue of blocked DNA replication forks via replication fork reversal (RFR). RuvA specifically binds to HJ cruciform DNA, conferring on it an open structure. The RuvB hexamer acts as an ATP-dependent pump, pulling dsDNA into and through the RuvAB complex. HJ branch migration allows RuvC to scan DNA until it finds its consensus sequence, where it cleaves and resolves the cruciform DNA. The polypeptide is Holliday junction branch migration complex subunit RuvA (Stenotrophomonas maltophilia (strain K279a)).